The sequence spans 178 residues: Protein FAM89A (178 aa).

It belongs to the FAM89 family.

The polypeptide is Protein FAM89A (FAM89A) (Bos taurus (Bovine)).